The following is a 108-amino-acid chain: UPF0060 membrane protein YnfA (108 aa).

Over 1–5 (MLKTT) the chain is Periplasmic. Residues 6–26 (LLFFVTALCEIIGCFLPWLWI) traverse the membrane as a helical segment. Topologically, residues 27-30 (KRGA) are cytoplasmic. Residues 31–51 (SVWWLLPAAASLALFVWLLTL) form a helical membrane-spanning segment. The Periplasmic portion of the chain corresponds to 52–60 (HPAASGRVY). A helical transmembrane segment spans residues 61–81 (AAYGGVYVCTALLWLRVVDGV). The Cytoplasmic portion of the chain corresponds to 82–84 (RLT). Residues 85–105 (VYDWCGALIALCGMLIIVVGW) traverse the membrane as a helical segment. At 106–108 (GRT) the chain is on the periplasmic side.

The protein belongs to the UPF0060 family.

Its subcellular location is the cell inner membrane. This Salmonella paratyphi A (strain ATCC 9150 / SARB42) protein is UPF0060 membrane protein YnfA.